Consider the following 269-residue polypeptide: GTP cyclohydrolase FolE2 (269 aa).

It belongs to the GTP cyclohydrolase IV family.

The enzyme catalyses GTP + H2O = 7,8-dihydroneopterin 3'-triphosphate + formate + H(+). The protein operates within cofactor biosynthesis; 7,8-dihydroneopterin triphosphate biosynthesis; 7,8-dihydroneopterin triphosphate from GTP: step 1/1. Its function is as follows. Converts GTP to 7,8-dihydroneopterin triphosphate. In Burkholderia mallei (strain NCTC 10229), this protein is GTP cyclohydrolase FolE2.